Here is a 65-residue protein sequence, read N- to C-terminus: uncharacterized protein (65 aa).

It localises to the plastid. Its subcellular location is the chloroplast. This is an uncharacterized protein from Guillardia theta (Cryptophyte).